A 556-amino-acid polypeptide reads, in one-letter code: Glutamine--tRNA ligase (556 aa).

Positions Pro-34–His-44 match the 'HIGH' region motif. Residues Glu-35–Asn-37 and His-41–Ser-47 each bind ATP. Residues Asp-67 and Tyr-212 each contribute to the L-glutamine site. ATP contacts are provided by residues Thr-231, Arg-261–Leu-262, and Met-269–Lys-271. The 'KMSKS' region motif lies at Val-268–Arg-272.

This sequence belongs to the class-I aminoacyl-tRNA synthetase family. In terms of assembly, monomer.

Its subcellular location is the cytoplasm. It catalyses the reaction tRNA(Gln) + L-glutamine + ATP = L-glutaminyl-tRNA(Gln) + AMP + diphosphate. The sequence is that of Glutamine--tRNA ligase from Vibrio vulnificus (strain YJ016).